The following is a 497-amino-acid chain: PHD finger protein 10 (497 aa).

Residues 1–13 (MTAAGPGAAPSPG) are compositionally biased toward low complexity. The segment at 1-61 (MTAAGPGAAP…SSRSCETSSQ (61 aa)) is disordered. A phosphoserine mark is found at serine 11, serine 35, and serine 49. The tract at residues 88-184 (MLQEQVSEYL…HYKEYSQMQQ (97 aa)) is essential to induce neural progenitor proliferation. Positions 88-294 (MLQEQVSEYL…PPLDPELPAL (207 aa)) are SAY. Lysine 240 is covalently cross-linked (Glycyl lysine isopeptide (Lys-Gly) (interchain with G-Cter in SUMO2)). Serine 269 carries the phosphoserine modification. Over residues 284-295 (EPPLDPELPALD) the composition is skewed to low complexity. Residues 284 to 368 (EPPLDPELPA…RSVLSKSAPG (85 aa)) are disordered. The essential to induce neural progenitor proliferation stretch occupies residues 291 to 333 (LPALDSDGDSDDGEDGGGDEKRKNKGTSDSSSGNVSEGDSPPD). Phosphoserine occurs at positions 296, 300, 326, and 330. Positions 296–307 (SDGDSDDGEDGG) are enriched in acidic residues. A compositionally biased stretch (polar residues) spans 317–327 (TSDSSSGNVSE). Over residues 337–358 (DTFHGRQKSKDKMATPRKDGSK) the composition is skewed to basic and acidic residues. Residues 378–435 (LCGICLKGKESNKKGKAESLIHCSQCDNSGHPSCLDMTMELVSMIKTYPWQCMECKTC) form a PHD-type 1; degenerate zinc finger. A Glycyl lysine isopeptide (Lys-Gly) (interchain with G-Cter in SUMO2) cross-link involves residue lysine 384. The segment at 437 to 480 (ICGQPHHEEEMMFCDVCDRGYHTFCVGLGAIPSGRWICDCCQRA) adopts a PHD-type 2; degenerate zinc-finger fold.

This sequence belongs to the SAYP family. Component of neural progenitors-specific chromatin remodeling complex (npBAF complex) composed of at least, ARID1A/BAF250A or ARID1B/BAF250B, SMARCD1/BAF60A, SMARCD3/BAF60C, SMARCA2/BRM/BAF190B, SMARCA4/BRG1/BAF190A, SMARCB1/BAF47, SMARCC1/BAF155, SMARCE1/BAF57, SMARCC2/BAF170, PHF10/BAF45A, ACTL6A/BAF53A and actin. Interacts with ACTL6A/BAF53A, SMARCA2/BRM/BAF190B, SMARCA4/BRG1/BAF190A and PBRM1/BAF180. Widely expressed. Expressed selectively in neural stem and progenitor cells (at protein level).

Its subcellular location is the nucleus. Its function is as follows. Involved in transcription activity regulation by chromatin remodeling. Belongs to the neural progenitors-specific chromatin remodeling complex (npBAF complex) and is required for the proliferation of neural progenitors. During neural development a switch from a stem/progenitor to a post-mitotic chromatin remodeling mechanism occurs as neurons exit the cell cycle and become committed to their adult state. The transition from proliferating neural stem/progenitor cells to post-mitotic neurons requires a switch in subunit composition of the npBAF and nBAF complexes. As neural progenitors exit mitosis and differentiate into neurons, npBAF complexes which contain ACTL6A/BAF53A and PHF10/BAF45A, are exchanged for homologous alternative ACTL6B/BAF53B and DPF1/BAF45B or DPF3/BAF45C subunits in neuron-specific complexes (nBAF). The npBAF complex is essential for the self-renewal/proliferative capacity of the multipotent neural stem cells. The nBAF complex along with CREST plays a role regulating the activity of genes essential for dendrite growth. The polypeptide is PHD finger protein 10 (Phf10) (Mus musculus (Mouse)).